Consider the following 388-residue polypeptide: tRNA (guanine(26)-N(2))-dimethyltransferase (388 aa).

The region spanning 7–381 (KTVEEGLTKI…APLKKIKEII (375 aa)) is the Trm1 methyltransferase domain. Residues Arg-40, Arg-70, Asp-88, Asp-115, and Ala-116 each coordinate S-adenosyl-L-methionine. The Zn(2+) site is built by Cys-248, Cys-251, Cys-268, and Cys-271.

Belongs to the class I-like SAM-binding methyltransferase superfamily. Trm1 family.

It carries out the reaction guanosine(26) in tRNA + 2 S-adenosyl-L-methionine = N(2)-dimethylguanosine(26) in tRNA + 2 S-adenosyl-L-homocysteine + 2 H(+). Dimethylates a single guanine residue at position 26 of a number of tRNAs using S-adenosyl-L-methionine as donor of the methyl groups. The chain is tRNA (guanine(26)-N(2))-dimethyltransferase from Methanobrevibacter smithii (strain ATCC 35061 / DSM 861 / OCM 144 / PS).